The following is a 146-amino-acid chain: Large ribosomal subunit protein bL19 (146 aa).

A disordered region spans residues 119–146 (DYRKKGEKGVEKVETTPVSADIETQVAE).

This sequence belongs to the bacterial ribosomal protein bL19 family.

In terms of biological role, this protein is located at the 30S-50S ribosomal subunit interface and may play a role in the structure and function of the aminoacyl-tRNA binding site. This is Large ribosomal subunit protein bL19 from Bartonella tribocorum (strain CIP 105476 / IBS 506).